The following is a 987-amino-acid chain: VPS35 endosomal protein sorting factor-like (987 aa).

Over residues 1–23 (MAERQSASSPTPSSPPQQQQQTP) the composition is skewed to low complexity. The segment at 1-115 (MAERQSASSP…DPLNNPLEKK (115 aa)) is disordered. Positions 43–63 (NGREVERHPLNSITKTEDTGK) are enriched in basic and acidic residues. Over residues 66 to 111 (QSSLSSNASSLQSAAAAASSSTATTDIDPLNNNNNNNTDIDPLNNP) the composition is skewed to low complexity.

It belongs to the VPS35L family. As to quaternary structure, component of the heterotrimeric retriever complex.

The protein localises to the endosome. Its function is as follows. Acts as a component of the retriever complex. The retriever complex is a heterotrimeric complex related to retromer cargo-selective complex (CSC) and essential for retromer-independent retrieval and recycling of numerous cargos. This is VPS35 endosomal protein sorting factor-like from Dictyostelium discoideum (Social amoeba).